Consider the following 307-residue polypeptide: Nucleotide-binding protein AAur_2084 (307 aa).

The disordered stretch occupies residues 1 to 21 (MDEATAKSGTEQDGLTPVKPP). Residue 30–37 (GMSGAGRS) participates in ATP binding. 81-84 (DVRS) provides a ligand contact to GTP.

It belongs to the RapZ-like family.

In terms of biological role, displays ATPase and GTPase activities. This chain is Nucleotide-binding protein AAur_2084, found in Paenarthrobacter aurescens (strain TC1).